Consider the following 229-residue polypeptide: Germin-like protein 12-1 (229 aa).

Residues 1–22 (MASSNFFLPTALIALVATQAMA) form the signal peptide. A disulfide bond links cysteine 32 and cysteine 47. The region spanning 62 to 217 (ANLDKPMDTT…AFQVDKKAVD (156 aa)) is the Cupin type-1 domain. Asparagine 78 carries N-linked (GlcNAc...) asparagine glycosylation. Mn(2+)-binding residues include histidine 111, histidine 113, glutamate 118, and histidine 162.

Belongs to the germin family. Oligomer (believed to be a pentamer but probably hexamer).

The protein resides in the secreted. The protein localises to the extracellular space. It localises to the apoplast. May play a role in plant defense. Probably has no oxalate oxidase activity even if the active site is conserved. The polypeptide is Germin-like protein 12-1 (Oryza sativa subsp. japonica (Rice)).